The primary structure comprises 76 residues: Protein sigN132 (76 aa).

Residues 1-13 show a composition bias toward polar residues; that stretch reads MLFESISTLSNLK. The segment at 1–33 is disordered; the sequence is MLFESISTLSNLKSASKSSMIASTGSTSSKSSN. Low complexity predominate over residues 14-33; it reads SASKSSMIASTGSTSSKSSN.

This is Protein sigN132 from Dictyostelium discoideum (Social amoeba).